The chain runs to 253 residues: Imidazole glycerol phosphate synthase subunit HisF (253 aa).

Catalysis depends on residues Asp11 and Asp130.

This sequence belongs to the HisA/HisF family. In terms of assembly, heterodimer of HisH and HisF.

The protein resides in the cytoplasm. It catalyses the reaction 5-[(5-phospho-1-deoxy-D-ribulos-1-ylimino)methylamino]-1-(5-phospho-beta-D-ribosyl)imidazole-4-carboxamide + L-glutamine = D-erythro-1-(imidazol-4-yl)glycerol 3-phosphate + 5-amino-1-(5-phospho-beta-D-ribosyl)imidazole-4-carboxamide + L-glutamate + H(+). The protein operates within amino-acid biosynthesis; L-histidine biosynthesis; L-histidine from 5-phospho-alpha-D-ribose 1-diphosphate: step 5/9. In terms of biological role, IGPS catalyzes the conversion of PRFAR and glutamine to IGP, AICAR and glutamate. The HisF subunit catalyzes the cyclization activity that produces IGP and AICAR from PRFAR using the ammonia provided by the HisH subunit. The chain is Imidazole glycerol phosphate synthase subunit HisF from Myxococcus xanthus (strain DK1622).